The sequence spans 40 residues: Accessory gland-specific peptide 57Db (40 aa).

A signal peptide spans 1–17; that stretch reads MKITSALVLLFAGVAFA.

As to expression, lumen fluid of male accessory glands, becomes seminal fluid.

The protein localises to the secreted. Its function is as follows. Transferred from male to female during mating and may affect egglaying and behavior after mating. The polypeptide is Accessory gland-specific peptide 57Db (Mst57Db) (Drosophila melanogaster (Fruit fly)).